The sequence spans 115 residues: Protachykinin-1 (115 aa).

Positions 1–19 are cleaved as a signal peptide; it reads MKILVALAVLALVSTQLFA. A propeptide spanning residues 20–56 is cleaved from the precursor; it reads EDIRANDDLNYWSDWSDSDQIKEELPEPFEHLLQRIA. Methionine amide occurs at positions 68 and 92.

It belongs to the tachykinin family. The substance P form is cleaved at Pro-59 by the prolyl endopeptidase FAP (seprase) activity (in vitro). Substance P is also cleaved and degraded by Angiotensin-converting enzyme (ACE) and neprilysin (MME).

Its subcellular location is the secreted. In terms of biological role, tachykinins are active peptides which excite neurons, evoke behavioral responses, are potent vasodilators and secretagogues, and contract (directly or indirectly) many smooth muscles. This Oryctolagus cuniculus (Rabbit) protein is Protachykinin-1 (TAC1).